A 436-amino-acid polypeptide reads, in one-letter code: UPF0597 protein YhaM (436 aa).

The protein belongs to the UPF0597 family.

In Salmonella paratyphi B (strain ATCC BAA-1250 / SPB7), this protein is UPF0597 protein YhaM.